The sequence spans 153 residues: Ribosome maturation factor RimP (153 aa).

It belongs to the RimP family.

It is found in the cytoplasm. Required for maturation of 30S ribosomal subunits. This is Ribosome maturation factor RimP from Solibacter usitatus (strain Ellin6076).